Here is a 463-residue protein sequence, read N- to C-terminus: Elongation factor 1-alpha 1 (463 aa).

Positions 5-242 (KIHINIVVIG…DAILPPARPT (238 aa)) constitute a tr-type G domain. The interval 14 to 21 (GHVDSGKS) is G1. A GTP-binding site is contributed by 14-21 (GHVDSGKS). Positions 70-74 (GITID) are G2. A G3 region spans residues 91-94 (DAPG). GTP contacts are provided by residues 91–95 (DAPGH) and 153–156 (NKMD). Residues 153 to 156 (NKMD) form a G4 region. Residues 194–196 (SGW) are G5. 5-glutamyl glycerylphosphorylethanolamine is present on residues Glu-301 and Glu-374.

It belongs to the TRAFAC class translation factor GTPase superfamily. Classic translation factor GTPase family. EF-Tu/EF-1A subfamily.

The protein localises to the cytoplasm. In terms of biological role, this protein promotes the GTP-dependent binding of aminoacyl-tRNA to the A-site of ribosomes during protein biosynthesis. This is Elongation factor 1-alpha 1 from Drosophila melanogaster (Fruit fly).